Here is a 460-residue protein sequence, read N- to C-terminus: ATP synthase subunit beta (460 aa).

150-157 contributes to the ATP binding site; sequence GGAGVGKT.

Belongs to the ATPase alpha/beta chains family. In terms of assembly, F-type ATPases have 2 components, CF(1) - the catalytic core - and CF(0) - the membrane proton channel. CF(1) has five subunits: alpha(3), beta(3), gamma(1), delta(1), epsilon(1). CF(0) has three main subunits: a(1), b(2) and c(9-12). The alpha and beta chains form an alternating ring which encloses part of the gamma chain. CF(1) is attached to CF(0) by a central stalk formed by the gamma and epsilon chains, while a peripheral stalk is formed by the delta and b chains.

It is found in the cell inner membrane. It carries out the reaction ATP + H2O + 4 H(+)(in) = ADP + phosphate + 5 H(+)(out). Its function is as follows. Produces ATP from ADP in the presence of a proton gradient across the membrane. The catalytic sites are hosted primarily by the beta subunits. In Sodalis glossinidius (strain morsitans), this protein is ATP synthase subunit beta.